Reading from the N-terminus, the 230-residue chain is 2,3-bisphosphoglycerate-dependent phosphoglycerate mutase (230 aa).

Substrate contacts are provided by residues 10 to 17, 23 to 24, arginine 62, 89 to 92, lysine 100, 116 to 117, and 185 to 186; these read RHGQSKWN, TG, ERHY, RR, and GN. Histidine 11 (tele-phosphohistidine intermediate) is an active-site residue. Glutamate 89 functions as the Proton donor/acceptor in the catalytic mechanism.

This sequence belongs to the phosphoglycerate mutase family. BPG-dependent PGAM subfamily. In terms of assembly, homodimer.

It catalyses the reaction (2R)-2-phosphoglycerate = (2R)-3-phosphoglycerate. It participates in carbohydrate degradation; glycolysis; pyruvate from D-glyceraldehyde 3-phosphate: step 3/5. In terms of biological role, catalyzes the interconversion of 2-phosphoglycerate and 3-phosphoglycerate. The polypeptide is 2,3-bisphosphoglycerate-dependent phosphoglycerate mutase (Buchnera aphidicola subsp. Schizaphis graminum (strain Sg)).